Consider the following 173-residue polypeptide: Lens fiber membrane intrinsic protein (173 aa).

The Cytoplasmic portion of the chain corresponds to 1–3; sequence MYS. A helical transmembrane segment spans residues 4-24; it reads FMGGGLFCAWVGTILLVVATA. Over 25–66 the chain is Extracellular; the sequence is TDHWMQYRLSGSFAHQGLWRYCLGNKCFLQTESIAYWNATRA. C-linked (Man) tryptophan glycosylation is found at W43 and W61. N-linked (GlcNAc...) asparagine glycosylation occurs at N62. Residues 67 to 87 form a helical membrane-spanning segment; the sequence is FMILSALCATSGIIMGVLAFA. Residues 88 to 98 lie on the Cytoplasmic side of the membrane; sequence QQSTFTRLSRP. The helical transmembrane segment at 99–119 threads the bilayer; that stretch reads FSAGIMFFASTLFVLLALAIY. The Extracellular portion of the chain corresponds to 120–140; the sequence is TGVTVSFLGRRFGDWRFSWSY. A helical transmembrane segment spans residues 141-161; it reads ILGWVALLMTFFAGIFYMCAY. The Cytoplasmic segment spans residues 162-173; the sequence is RMHECRRLATPR. T171 is subject to Phosphothreonine.

This sequence belongs to the PMP-22/EMP/MP20 family. In terms of assembly, seems to be associated with itself or another lens membrane component via disulfide bonds.

Its subcellular location is the membrane. In terms of biological role, present in the thicker 16-17 nm junctions of mammalian lens fiber cells, where it may contribute to cell junctional organization. Acts as a receptor for calmodulin. May play an important role in both lens development and cataractogenesis. This Mus musculus (Mouse) protein is Lens fiber membrane intrinsic protein (Lim2).